We begin with the raw amino-acid sequence, 465 residues long: Ribulose bisphosphate carboxylase large chain (465 aa).

Lysine 4 bears the N6,N6,N6-trimethyllysine mark. Substrate-binding residues include asparagine 113 and threonine 163. Catalysis depends on lysine 165, which acts as the Proton acceptor. Residue lysine 167 participates in substrate binding. Residues lysine 191, aspartate 193, and glutamate 194 each contribute to the Mg(2+) site. Residue lysine 191 is modified to N6-carboxylysine. The active-site Proton acceptor is the histidine 284. Residues arginine 285, histidine 317, and serine 369 each coordinate substrate.

Belongs to the RuBisCO large chain family. Type I subfamily. As to quaternary structure, heterohexadecamer of 8 large chains and 8 small chains; disulfide-linked. The disulfide link is formed within the large subunit homodimers. The cofactor is Mg(2+). Post-translationally, the disulfide bond which can form in the large chain dimeric partners within the hexadecamer appears to be associated with oxidative stress and protein turnover.

It is found in the plastid. Its subcellular location is the chloroplast. It catalyses the reaction 2 (2R)-3-phosphoglycerate + 2 H(+) = D-ribulose 1,5-bisphosphate + CO2 + H2O. The catalysed reaction is D-ribulose 1,5-bisphosphate + O2 = 2-phosphoglycolate + (2R)-3-phosphoglycerate + 2 H(+). RuBisCO catalyzes two reactions: the carboxylation of D-ribulose 1,5-bisphosphate, the primary event in carbon dioxide fixation, as well as the oxidative fragmentation of the pentose substrate in the photorespiration process. Both reactions occur simultaneously and in competition at the same active site. In Nepenthes alata (Winged pitcher plant), this protein is Ribulose bisphosphate carboxylase large chain.